We begin with the raw amino-acid sequence, 317 residues long: Olfactory receptor 1B1 (317 aa).

Topologically, residues 1-29 (MSFAPNASHSPVFLLLGFSRANISYTLLF) are extracellular. N6 and N22 each carry an N-linked (GlcNAc...) asparagine glycan. Residues 30-50 (FLFLAIYLTTILGNVTLVLLI) form a helical membrane-spanning segment. At 51–66 (SWDSRLHSPMYYLLRG) the chain is on the cytoplasmic side. The chain crosses the membrane as a helical span at residues 67-87 (LSVIDMGLSTVTLPQLLAHLV). Residues 88-98 (SHYPTIPAARC) lie on the Extracellular side of the membrane. Cysteines 98 and 184 form a disulfide. Residues 99-119 (LAQFFFFYAFGVTDTLVIAVM) traverse the membrane as a helical segment. Over 120–144 (ALDRYVAICDPLHYALVMNHQRCAC) the chain is Cytoplasmic. Residues 145-165 (LLALSWVVSILHTMLRVGLVL) traverse the membrane as a helical segment. Over 166 to 201 (PLCWTGDAGGNVNLPHFFCDHRPLLRASCSDIHSNE) the chain is Extracellular. Residues 202-222 (LAIFFEGGFLMLGPCALIVLS) traverse the membrane as a helical segment. Residues 223-248 (YVRIGAAILRLPSAAGRRRAVSTCGS) are Cytoplasmic-facing. A helical membrane pass occupies residues 249–269 (HLTMVGFLYGTIICVYFQPPF). Topologically, residues 270–276 (QNSQYQD) are extracellular. Residues 277–297 (MVASVMYTAITPLANPFVYSL) traverse the membrane as a helical segment. Residues 298-317 (HNKDVKGALCRLLEWVKVDP) lie on the Cytoplasmic side of the membrane.

It belongs to the G-protein coupled receptor 1 family.

The protein localises to the cell membrane. In terms of biological role, odorant receptor. This Homo sapiens (Human) protein is Olfactory receptor 1B1 (OR1B1).